Consider the following 346-residue polypeptide: Methionine import ATP-binding protein MetN 1 (346 aa).

The ABC transporter domain maps to 2-241 (IELKNVSKVF…PQHVTTKKFV (240 aa)). 38 to 45 (GYSGAGKS) provides a ligand contact to ATP.

The protein belongs to the ABC transporter superfamily. Methionine importer (TC 3.A.1.24) family. As to quaternary structure, the complex is composed of two ATP-binding proteins (MetN), two transmembrane proteins (MetI) and a solute-binding protein (MetQ).

The protein resides in the cell membrane. The catalysed reaction is L-methionine(out) + ATP + H2O = L-methionine(in) + ADP + phosphate + H(+). The enzyme catalyses D-methionine(out) + ATP + H2O = D-methionine(in) + ADP + phosphate + H(+). In terms of biological role, part of the ABC transporter complex MetNIQ involved in methionine import. Responsible for energy coupling to the transport system. The chain is Methionine import ATP-binding protein MetN 1 from Bacillus anthracis.